A 453-amino-acid chain; its full sequence is Ribosomal protein uS12 methylthiotransferase RimO (453 aa).

The MTTase N-terminal domain maps to 6-116 (PKVGFVSLGC…VMEAVHEALP (111 aa)). Residues cysteine 15, cysteine 51, cysteine 80, cysteine 147, cysteine 151, and cysteine 154 each coordinate [4Fe-4S] cluster. In terms of domain architecture, Radical SAM core spans 133-370 (LTPRHYAYLK…MEKQAQISAA (238 aa)). A TRAM domain is found at 373-441 (EAKIGTVQQC…EHDLYGDALP (69 aa)).

Belongs to the methylthiotransferase family. RimO subfamily. The cofactor is [4Fe-4S] cluster.

It localises to the cytoplasm. It catalyses the reaction L-aspartate(89)-[ribosomal protein uS12]-hydrogen + (sulfur carrier)-SH + AH2 + 2 S-adenosyl-L-methionine = 3-methylsulfanyl-L-aspartate(89)-[ribosomal protein uS12]-hydrogen + (sulfur carrier)-H + 5'-deoxyadenosine + L-methionine + A + S-adenosyl-L-homocysteine + 2 H(+). In terms of biological role, catalyzes the methylthiolation of an aspartic acid residue of ribosomal protein uS12. This is Ribosomal protein uS12 methylthiotransferase RimO from Stenotrophomonas maltophilia (strain K279a).